A 155-amino-acid polypeptide reads, in one-letter code: uncharacterized protein (155 aa).

Helical transmembrane passes span 25-45 (LPMG…FGWT), 50-70 (IFWF…IMTS), 91-111 (GVKI…ESLF), and 118-138 (WGCT…PILF).

Belongs to the major facilitator superfamily. CAR1 family.

It is found in the membrane. This is an uncharacterized protein from Schizosaccharomyces pombe (strain 972 / ATCC 24843) (Fission yeast).